The chain runs to 173 residues: MDYFTLLGMPNRFDIDKQQLASRYQEMQRQYHPDRFAGKSDKEQVQAISFASTINQAYQTLKNPLSRAEYMLSLQGIDIANEQQTMHDTAFLMEQLTLREELDDIEHSTDAENLLADFSARLEKMYTVRYDEMVKTLDSQTWDIAADNVRKLRFLAKLKEQVEHLEERLFDGF.

The J domain maps to 2-74 (DYFTLLGMPN…LSRAEYMLSL (73 aa)).

This sequence belongs to the HscB family. In terms of assembly, interacts with HscA and stimulates its ATPase activity. Interacts with IscU.

In terms of biological role, co-chaperone involved in the maturation of iron-sulfur cluster-containing proteins. Seems to help targeting proteins to be folded toward HscA. The chain is Co-chaperone protein HscB from Proteus mirabilis (strain HI4320).